We begin with the raw amino-acid sequence, 693 residues long: DNA ligase (693 aa).

NAD(+)-binding positions include Asp-43 to Asp-47, Ser-92 to Leu-93, and Glu-123. Lys-125 functions as the N6-AMP-lysine intermediate in the catalytic mechanism. NAD(+) is bound by residues Arg-146, Glu-180, Lys-296, and Lys-320. Zn(2+) is bound by residues Cys-414, Cys-417, Cys-433, and Cys-438. Residues Val-595–Glu-684 enclose the BRCT domain.

Belongs to the NAD-dependent DNA ligase family. LigA subfamily. Mg(2+) is required as a cofactor. Mn(2+) serves as cofactor.

It carries out the reaction NAD(+) + (deoxyribonucleotide)n-3'-hydroxyl + 5'-phospho-(deoxyribonucleotide)m = (deoxyribonucleotide)n+m + AMP + beta-nicotinamide D-nucleotide.. Its function is as follows. DNA ligase that catalyzes the formation of phosphodiester linkages between 5'-phosphoryl and 3'-hydroxyl groups in double-stranded DNA using NAD as a coenzyme and as the energy source for the reaction. It is essential for DNA replication and repair of damaged DNA. This is DNA ligase from Thermotoga neapolitana (strain ATCC 49049 / DSM 4359 / NBRC 107923 / NS-E).